The chain runs to 1296 residues: DNA-directed RNA polymerase subunit beta' (1296 aa).

Residues cysteine 60, cysteine 62, cysteine 75, and cysteine 78 each contribute to the Zn(2+) site. Mg(2+)-binding residues include aspartate 535, aspartate 537, and aspartate 539. Zn(2+)-binding residues include cysteine 877, cysteine 954, cysteine 961, and cysteine 964.

This sequence belongs to the RNA polymerase beta' chain family. The RNAP catalytic core consists of 2 alpha, 1 beta, 1 beta' and 1 omega subunit. When a sigma factor is associated with the core the holoenzyme is formed, which can initiate transcription. Mg(2+) serves as cofactor. Zn(2+) is required as a cofactor.

It carries out the reaction RNA(n) + a ribonucleoside 5'-triphosphate = RNA(n+1) + diphosphate. In terms of biological role, DNA-dependent RNA polymerase catalyzes the transcription of DNA into RNA using the four ribonucleoside triphosphates as substrates. The sequence is that of DNA-directed RNA polymerase subunit beta' from Beutenbergia cavernae (strain ATCC BAA-8 / DSM 12333 / CCUG 43141 / JCM 11478 / NBRC 16432 / NCIMB 13614 / HKI 0122).